The primary structure comprises 123 residues: Small ribosomal subunit protein uS12 (123 aa).

Aspartate 89 carries the 3-methylthioaspartic acid modification.

It belongs to the universal ribosomal protein uS12 family. As to quaternary structure, part of the 30S ribosomal subunit. Contacts proteins S8 and S17. May interact with IF1 in the 30S initiation complex.

In terms of biological role, with S4 and S5 plays an important role in translational accuracy. Functionally, interacts with and stabilizes bases of the 16S rRNA that are involved in tRNA selection in the A site and with the mRNA backbone. Located at the interface of the 30S and 50S subunits, it traverses the body of the 30S subunit contacting proteins on the other side and probably holding the rRNA structure together. The combined cluster of proteins S8, S12 and S17 appears to hold together the shoulder and platform of the 30S subunit. The chain is Small ribosomal subunit protein uS12 from Anaeromyxobacter dehalogenans (strain 2CP-1 / ATCC BAA-258).